The primary structure comprises 131 residues: Profilin-2 (131 aa).

The protein belongs to the profilin family. In terms of assembly, occurs in many kinds of cells as a complex with monomeric actin in a 1:1 ratio.

The protein localises to the cytoplasm. The protein resides in the cytoskeleton. In terms of biological role, binds to actin and affects the structure of the cytoskeleton. At high concentrations, profilin prevents the polymerization of actin, whereas it enhances it at low concentrations. By binding to PIP2, it inhibits the formation of IP3 and DG. This is Profilin-2 (PRO2) from Triticum aestivum (Wheat).